The sequence spans 370 residues: UDP-N-acetylglucosamine--N-acetylmuramyl-(pentapeptide) pyrophosphoryl-undecaprenol N-acetylglucosamine transferase (370 aa).

Residues 15–17, Asn126, Arg169, Ser197, and Gln299 each bind UDP-N-acetyl-alpha-D-glucosamine; that span reads TGG.

It belongs to the glycosyltransferase 28 family. MurG subfamily.

It is found in the cell inner membrane. The enzyme catalyses di-trans,octa-cis-undecaprenyl diphospho-N-acetyl-alpha-D-muramoyl-L-alanyl-D-glutamyl-meso-2,6-diaminopimeloyl-D-alanyl-D-alanine + UDP-N-acetyl-alpha-D-glucosamine = di-trans,octa-cis-undecaprenyl diphospho-[N-acetyl-alpha-D-glucosaminyl-(1-&gt;4)]-N-acetyl-alpha-D-muramoyl-L-alanyl-D-glutamyl-meso-2,6-diaminopimeloyl-D-alanyl-D-alanine + UDP + H(+). It participates in cell wall biogenesis; peptidoglycan biosynthesis. In terms of biological role, cell wall formation. Catalyzes the transfer of a GlcNAc subunit on undecaprenyl-pyrophosphoryl-MurNAc-pentapeptide (lipid intermediate I) to form undecaprenyl-pyrophosphoryl-MurNAc-(pentapeptide)GlcNAc (lipid intermediate II). This chain is UDP-N-acetylglucosamine--N-acetylmuramyl-(pentapeptide) pyrophosphoryl-undecaprenol N-acetylglucosamine transferase, found in Methylorubrum populi (strain ATCC BAA-705 / NCIMB 13946 / BJ001) (Methylobacterium populi).